The following is a 199-amino-acid chain: Glycerol-3-phosphate acyltransferase (199 aa).

A run of 5 helical transmembrane segments spans residues 5 to 25 (AFLV…VALV), 51 to 71 (KLGV…VLCA), 79 to 99 (VFLS…VFLY), 112 to 132 (VFLG…VAVI), and 153 to 173 (CAWL…GLVI).

The protein belongs to the PlsY family. In terms of assembly, probably interacts with PlsX.

The protein resides in the cell inner membrane. It carries out the reaction an acyl phosphate + sn-glycerol 3-phosphate = a 1-acyl-sn-glycero-3-phosphate + phosphate. It participates in lipid metabolism; phospholipid metabolism. Catalyzes the transfer of an acyl group from acyl-phosphate (acyl-PO(4)) to glycerol-3-phosphate (G3P) to form lysophosphatidic acid (LPA). This enzyme utilizes acyl-phosphate as fatty acyl donor, but not acyl-CoA or acyl-ACP. In Solidesulfovibrio magneticus (strain ATCC 700980 / DSM 13731 / RS-1) (Desulfovibrio magneticus), this protein is Glycerol-3-phosphate acyltransferase.